A 338-amino-acid polypeptide reads, in one-letter code: Phenylalanine--tRNA ligase alpha subunit (338 aa).

Glu-253 provides a ligand contact to Mg(2+).

Belongs to the class-II aminoacyl-tRNA synthetase family. Phe-tRNA synthetase alpha subunit type 1 subfamily. As to quaternary structure, tetramer of two alpha and two beta subunits. It depends on Mg(2+) as a cofactor.

It localises to the cytoplasm. The enzyme catalyses tRNA(Phe) + L-phenylalanine + ATP = L-phenylalanyl-tRNA(Phe) + AMP + diphosphate + H(+). The chain is Phenylalanine--tRNA ligase alpha subunit from Geobacter metallireducens (strain ATCC 53774 / DSM 7210 / GS-15).